The following is a 475-amino-acid chain: Ribulose bisphosphate carboxylase large chain (475 aa).

A propeptide spanning residues Met1–Ser2 is cleaved from the precursor. Pro3 is subject to N-acetylproline. Lys14 is subject to N6,N6,N6-trimethyllysine. Substrate contacts are provided by Asn123 and Thr173. The Proton acceptor role is filled by Lys175. Position 177 (Lys177) interacts with substrate. Positions 201, 203, and 204 each coordinate Mg(2+). Lys201 is subject to N6-carboxylysine. His294 acts as the Proton acceptor in catalysis. Residues Arg295, His327, and Ser379 each coordinate substrate.

It belongs to the RuBisCO large chain family. Type I subfamily. In terms of assembly, heterohexadecamer of 8 large chains and 8 small chains; disulfide-linked. The disulfide link is formed within the large subunit homodimers. The cofactor is Mg(2+). The disulfide bond which can form in the large chain dimeric partners within the hexadecamer appears to be associated with oxidative stress and protein turnover.

Its subcellular location is the plastid. The protein resides in the chloroplast. The enzyme catalyses 2 (2R)-3-phosphoglycerate + 2 H(+) = D-ribulose 1,5-bisphosphate + CO2 + H2O. It catalyses the reaction D-ribulose 1,5-bisphosphate + O2 = 2-phosphoglycolate + (2R)-3-phosphoglycerate + 2 H(+). RuBisCO catalyzes two reactions: the carboxylation of D-ribulose 1,5-bisphosphate, the primary event in carbon dioxide fixation, as well as the oxidative fragmentation of the pentose substrate in the photorespiration process. Both reactions occur simultaneously and in competition at the same active site. This chain is Ribulose bisphosphate carboxylase large chain, found in Chloranthus spicatus (Chulantree).